We begin with the raw amino-acid sequence, 475 residues long: MKSELIFLPAPAIGHLVGMVEMAKLFISRHENLSVTVLIAKFYMDTGVDNYNKSLLTNPTPRLTIVNLPETDPQNYMLKPRHAIFPSVIETQKTHVRDIISGMTQSESTRVVGLLADLLFINIMDIANEFNVPTYVYSPAGAGHLGLAFHLQTLNDKKQDVTEFRNSDTELLVPSFANPVPAEVLPSMYVDKEGGYDYLFSLFRRCRESKAIIINTFEELEPYAINSLRMDSMIPPIYPVGPILNLNGDGQNSDEAAVILGWLDDQPPSSVVFLCFGSYGTFQENQVKEIAMGLERSGHRFLWSLRPSIPKGETKLQLKYSNLEEILPVGFLDRTSCVGKVIGWAPQVAVLGHEAVGGFLSHCGWNSTLESVWCGVPVATWPMYGEQQLNAFEMVKELGIAVEIEVDYKNEYFNMNNDFIVRAEEIETKIKKLMMDEKNSEIRKKVKEMKEKSRLAMSENGSSYNSLAKLFEEIM.

Catalysis depends on His-15, which acts as the Proton acceptor. His-15 is a binding site for an anthocyanidin. The Charge relay role is filled by Asp-117. UDP-alpha-D-glucose contacts are provided by Ala-345, Gln-347, His-362, Trp-365, Asn-366, Ser-367, and Glu-370. Gly-385 contributes to the an anthocyanidin binding site. Residues Glu-386 and Gln-387 each coordinate UDP-alpha-D-glucose.

Belongs to the UDP-glycosyltransferase family.

The enzyme catalyses (20S)-protopanaxadiol + UDP-alpha-D-glucose = (20S)-ginsenoside C-K + UDP + H(+). The catalysed reaction is (20S)-ginsenoside Rg3 + UDP-alpha-D-glucose = (20S)-ginsenoside Rd + UDP + H(+). It carries out the reaction (20S)-protopanaxatriol + UDP-alpha-D-glucose = (20S)-ginsenoside F1 + UDP + H(+). It catalyses the reaction (20S)-ginsenoside F1 + UDP-alpha-D-glucose = (20S)-ginsenoside Rg1 + UDP + H(+). It functions in the pathway secondary metabolite biosynthesis; terpenoid biosynthesis. Functionally, component of the dammarane-type triterpene saponins (e.g. ginsenosides or panaxosides) biosynthetic pathway. Glycosyltransferase that catalyzes the biosynthesis of ginsenoside F1 from protopanaxatriol (PPT) and the conversion of ginsenoside F1 to ginsenoside Rg1. Triggers C20-OH glycosylation of ginsenoside Rg3 to produce ginsenoside Rd. Mediates the conversion of protopanaxadiol (PPD) to the ginsenoside compound K. The polypeptide is UDP-glycosyltransferase 101 (Panax ginseng (Korean ginseng)).